We begin with the raw amino-acid sequence, 869 residues long: Eukaryotic translation initiation factor 3 subunit C (869 aa).

Disordered regions lie at residues 1-92 and 182-242; these read MSRF…KSAK and IKKA…VGKG. The segment covering 14–55 has biased composition (acidic residues); sequence SSDEEEDLYSDDEEVQEQPEEESSEDDSEEDDDDDDDSDSSS. Residues 185–203 show a composition bias toward basic and acidic residues; it reads ASKEHQKDIDSFRADKDAY. In terms of domain architecture, PCI spans 607 to 781; the sequence is FHMHINLELL…SSIIFRKGVE (175 aa). Residues 803–869 are disordered; the sequence is NERTLETRTQ…ALGAAVGSRA (67 aa). Residues 823 to 843 are compositionally biased toward gly residues; the sequence is GRGGRGGNRGGRGGGRGGRGG.

Belongs to the eIF-3 subunit C family. In terms of assembly, component of the eukaryotic translation initiation factor 3 (eIF-3) complex.

Its subcellular location is the cytoplasm. Component of the eukaryotic translation initiation factor 3 (eIF-3) complex, which is involved in protein synthesis of a specialized repertoire of mRNAs and, together with other initiation factors, stimulates binding of mRNA and methionyl-tRNAi to the 40S ribosome. The eIF-3 complex specifically targets and initiates translation of a subset of mRNAs involved in cell proliferation. This Botryotinia fuckeliana (strain B05.10) (Noble rot fungus) protein is Eukaryotic translation initiation factor 3 subunit C (nip1).